The chain runs to 322 residues: Beta-ketoacyl-[acyl-carrier-protein] synthase III (322 aa).

Residues Cys113 and His247 contribute to the active site. An ACP-binding region spans residues 248-252 (QANIR). Asn278 is a catalytic residue.

The protein belongs to the thiolase-like superfamily. FabH family. As to quaternary structure, homodimer.

It localises to the cytoplasm. It catalyses the reaction malonyl-[ACP] + acetyl-CoA + H(+) = 3-oxobutanoyl-[ACP] + CO2 + CoA. Its pathway is lipid metabolism; fatty acid biosynthesis. In terms of biological role, catalyzes the condensation reaction of fatty acid synthesis by the addition to an acyl acceptor of two carbons from malonyl-ACP. Catalyzes the first condensation reaction which initiates fatty acid synthesis and may therefore play a role in governing the total rate of fatty acid production. Possesses both acetoacetyl-ACP synthase and acetyl transacylase activities. Its substrate specificity determines the biosynthesis of branched-chain and/or straight-chain of fatty acids. The chain is Beta-ketoacyl-[acyl-carrier-protein] synthase III from Tropheryma whipplei (strain TW08/27) (Whipple's bacillus).